The sequence spans 93 residues: Conotoxin Mr105 (93 aa).

The first 22 residues, 1 to 22 (MQRGAVLLGVVALLVLWPQAGA), serve as a signal peptide directing secretion. The propeptide occupies 23-33 (ELYDVNDPDVR).

Belongs to the F superfamily. Post-translationally, contains 4 disulfide bonds. As to expression, expressed by the venom duct.

It is found in the secreted. The chain is Conotoxin Mr105 from Conus marmoreus (Marble cone).